The chain runs to 331 residues: 2-hydroxyacid dehydrogenase homolog (331 aa).

Residues 154–155 (KI), 232–234 (TSR), and Asp258 contribute to the NAD(+) site. The active site involves Arg234. Glu263 is a catalytic residue. The Proton donor role is filled by His295. 295-298 (HQAF) contributes to the NAD(+) binding site.

Belongs to the D-isomer specific 2-hydroxyacid dehydrogenase family.

The polypeptide is 2-hydroxyacid dehydrogenase homolog (ddh) (Haemophilus influenzae (strain ATCC 51907 / DSM 11121 / KW20 / Rd)).